The primary structure comprises 298 residues: Transcription factor RHD6 (298 aa).

Disordered stretches follow at residues 1–58 (MALV…SDHQ) and 157–213 (TGSR…AKNR). A compositionally biased stretch (low complexity) spans 15–27 (SKQNSSSSEDLSS). Polar residues-rich tracts occupy residues 157-168 (TGSRNESLSPKS) and 177-190 (GEST…SSGV). Low complexity predominate over residues 191–205 (TGKTKPKPTTSPKDP). Residues 201-214 (SPKDPQSLAAKNRR) are basic motif. Positions 201 to 250 (SPKDPQSLAAKNRRERISERLKILQELVPNGTKVDLVTMLEKAISYVKFL) constitute a bHLH domain. The interval 215–250 (ERISERLKILQELVPNGTKVDLVTMLEKAISYVKFL) is helix-loop-helix motif.

Homodimer. Forms heterodimers with RSL1. Interacts with TIFY10B/JAZ2, TIFY6A/JAZ4, TIFY5A/JAZ8, TIFY7/JAZ9 and TIFY9/JAZ10. In terms of tissue distribution, expressed constitutively in flowers. Expressed in root epidermal hair cells.

The protein localises to the nucleus. In terms of biological role, transcription factor that is specifically required for the development of root hairs. Acts with RSL1 to positively regulate root hair development. Acts downstream of genes that regulate epidermal pattern formation, such as GL2. Targets directly RSL4, another transcription factor involved in the regulation of root hair elongation. Acts with RSL1 as transcription factor that integrates a jasmonate (JA) signaling pathway that stimulates root hair growth. The protein is Transcription factor RHD6 of Arabidopsis thaliana (Mouse-ear cress).